The sequence spans 503 residues: Maturase K (503 aa).

This sequence belongs to the intron maturase 2 family. MatK subfamily.

Its subcellular location is the plastid. It is found in the chloroplast. Its function is as follows. Usually encoded in the trnK tRNA gene intron. Probably assists in splicing its own and other chloroplast group II introns. This is Maturase K from Diospyros virginiana (American persimmon).